Reading from the N-terminus, the 176-residue chain is Ribosome maturation factor RimM (176 aa).

The PRC barrel domain occupies 96-176; that stretch reads PADEFYWRDL…QILVDWDPDF (81 aa).

It belongs to the RimM family. Binds ribosomal protein uS19.

It is found in the cytoplasm. Its function is as follows. An accessory protein needed during the final step in the assembly of 30S ribosomal subunit, possibly for assembly of the head region. Essential for efficient processing of 16S rRNA. May be needed both before and after RbfA during the maturation of 16S rRNA. It has affinity for free ribosomal 30S subunits but not for 70S ribosomes. In Shewanella baltica (strain OS223), this protein is Ribosome maturation factor RimM.